The primary structure comprises 315 residues: GTP cyclohydrolase MptA (315 aa).

It belongs to the GTP cyclohydrolase IV family. As to quaternary structure, homodimer. It depends on Fe(2+) as a cofactor.

It catalyses the reaction GTP + H2O = 7,8-dihydroneopterin 2',3'-cyclic phosphate + formate + diphosphate + H(+). Its pathway is cofactor biosynthesis; 5,6,7,8-tetrahydromethanopterin biosynthesis. In terms of biological role, converts GTP to 7,8-dihydro-D-neopterin 2',3'-cyclic phosphate, the first intermediate in the biosynthesis of coenzyme methanopterin. The protein is GTP cyclohydrolase MptA of Methanococcus maripaludis (strain DSM 14266 / JCM 13030 / NBRC 101832 / S2 / LL).